We begin with the raw amino-acid sequence, 513 residues long: GMP synthase [glutamine-hydrolyzing] (513 aa).

The 190-residue stretch at 9–198 (LILVLDFGSQ…VRRVCDCKGQ (190 aa)) folds into the Glutamine amidotransferase type-1 domain. The active-site Nucleophile is the Cys-86. Residues His-172 and Glu-174 contribute to the active site. Positions 199-388 (WTMENFIEIE…LGIPEHLVWR (190 aa)) constitute a GMPS ATP-PPase domain. ATP is bound at residue 226 to 232 (SGGVDSS).

As to quaternary structure, homodimer.

It catalyses the reaction XMP + L-glutamine + ATP + H2O = GMP + L-glutamate + AMP + diphosphate + 2 H(+). It participates in purine metabolism; GMP biosynthesis; GMP from XMP (L-Gln route): step 1/1. Its function is as follows. Catalyzes the synthesis of GMP from XMP. The chain is GMP synthase [glutamine-hydrolyzing] from Staphylococcus aureus (strain Mu3 / ATCC 700698).